Here is a 380-residue protein sequence, read N- to C-terminus: MVHILSSALSLLRLGAAVSAAPAPAPTAAPNVADALAAVEKRAGSCTFSDPAVPLPAIKSKASCATIVISAVAVPSGTTLDLTGLKSGTHVVFEGTTTFGYEEWSGPLVSVSGTDITVTGASGSVLDGNGAKYWDGKGTNGGKTKPKFFYAHSLKGKSSINNVKILNSPVQVFSINSASGLTLSGITIDNSAGNSLGHNTDAFDVGSSTDITISGANVQNQDDCLAINSGTGITFTGGTCSGGHGLSIGSVGGRSDNVVSDVIIESSTVKNSANGVRIKTVLGATGSVSGVTYKDITLSGITSYGVVIEQDYENGSPTGKPTSGVPITGVTLSNVHGTVSSSATNVYVLCAKCSGWTWDVNVTGGKTSTKCAGLPSGVKC.

Positions 1 to 17 (MVHILSSALSLLRLGAA) are cleaved as a signal peptide. A propeptide spanning residues 18-42 (VSAAPAPAPTAAPNVADALAAVEKR) is cleaved from the precursor. The cysteines at positions 46 and 64 are disulfide-linked. PbH1 repeat units follow at residues 178-207 (ASGL…DVGS), 208-229 (STDI…AINS), 230-250 (GTGI…SIGS), 259-280 (VSDV…RIKT), 288-310 (VSGV…VIEQ), and 322-343 (TSGV…SSSA). Asp222 functions as the Proton donor in the catalytic mechanism. A disulfide bridge links Cys224 with Cys240. Residue His244 is part of the active site. Cys350 and Cys353 are joined by a disulfide. The N-linked (GlcNAc...) asparagine glycan is linked to Asn361. Residues Cys371 and Cys380 are joined by a disulfide bond.

Belongs to the glycosyl hydrolase 28 family.

The protein resides in the secreted. It carries out the reaction (1,4-alpha-D-galacturonosyl)n+m + H2O = (1,4-alpha-D-galacturonosyl)n + (1,4-alpha-D-galacturonosyl)m.. This chain is Endo-polygalacturonase (PG1), found in Sclerotinia sclerotiorum (White mold).